A 157-amino-acid polypeptide reads, in one-letter code: NADH-quinone oxidoreductase subunit I (157 aa).

4Fe-4S ferredoxin-type domains lie at 47–78 (YLTK…VKPA) and 94–123 (SDFQ…LSNQ). [4Fe-4S] cluster contacts are provided by C58, C61, C64, C68, C103, C106, C109, and C113.

This sequence belongs to the complex I 23 kDa subunit family. NDH-1 is composed of 14 different subunits. Subunits NuoA, H, J, K, L, M, N constitute the membrane sector of the complex. The cofactor is [4Fe-4S] cluster.

It is found in the cell inner membrane. The catalysed reaction is a quinone + NADH + 5 H(+)(in) = a quinol + NAD(+) + 4 H(+)(out). Its function is as follows. NDH-1 shuttles electrons from NADH, via FMN and iron-sulfur (Fe-S) centers, to quinones in the respiratory chain. The immediate electron acceptor for the enzyme in this species is believed to be ubiquinone. Couples the redox reaction to proton translocation (for every two electrons transferred, four hydrogen ions are translocated across the cytoplasmic membrane), and thus conserves the redox energy in a proton gradient. The protein is NADH-quinone oxidoreductase subunit I (nuoI) of Protochlamydia amoebophila (strain UWE25).